A 158-amino-acid chain; its full sequence is Toxin Tse2 (158 aa).

In terms of assembly, forms a heterotetramer with Tsi2 consisting of two Tse2 dimers and two Tsi2 dimers. Formation of the complex inactivates Tse2 enzymatic activity.

It is found in the secreted. In terms of biological role, toxin secreted by the H1 type VI (H1-T6SS) secretion system into the cytoplasm of recipient cells. Acts likely as a NAD-dependent cytotoxin towards both prokaryotic and eukaryotic cells. This chain is Toxin Tse2, found in Pseudomonas aeruginosa (strain ATCC 15692 / DSM 22644 / CIP 104116 / JCM 14847 / LMG 12228 / 1C / PRS 101 / PAO1).